Here is a 225-residue protein sequence, read N- to C-terminus: MEEVYASELRGREPETVDTLFLDNTQGGVIGGINEKLTKLELLSMVKCGLTTLKGMPVLPALNYLDLSDNELGDDASFDVLIKCAPEIKKITLSGNRLTLDNVRTLKMLPNLMELDLSNNSSLGLLDDYRVKMFEMIPSLKILDGCDVDGEEVEEEFAAGEGAEDSDEGDSDEDGPGLSYLNKSQFSDDETDDYVVPEAGDAETRGAKRAASADCDEPEAKKSAE.

3 LRR repeats span residues 39–60, 61–82, and 87–107; these read KLEL…PVLP, ALNY…DVLI, and EIKK…RTLK. One can recognise an LRRCT domain in the interval 121-161; it reads SSLGLLDDYRVKMFEMIPSLKILDGCDVDGEEVEEEFAAGE. Residues 155 to 175 show a composition bias toward acidic residues; sequence EEFAAGEGAEDSDEGDSDEDG. The interval 155-225 is disordered; that stretch reads EEFAAGEGAE…DEPEAKKSAE (71 aa).

The protein belongs to the ANP32 family.

The sequence is that of Acidic leucine-rich nuclear phosphoprotein 32-related protein 2 from Caenorhabditis elegans.